The primary structure comprises 124 residues: Large ribosomal subunit protein uL14 (124 aa).

It belongs to the universal ribosomal protein uL14 family. As to quaternary structure, part of the 50S ribosomal subunit. Forms a cluster with proteins L3 and L19. In the 70S ribosome, L14 and L19 interact and together make contacts with the 16S rRNA in bridges B5 and B8.

Its function is as follows. Binds to 23S rRNA. Forms part of two intersubunit bridges in the 70S ribosome. This is Large ribosomal subunit protein uL14 from Clostridium novyi (strain NT).